The primary structure comprises 437 residues: Magnetosome protein MamN (437 aa).

11 consecutive transmembrane segments (helical) span residues 26–46 (LAVL…GSYT), 53–73 (SVYF…ALLA), 95–115 (WILV…NSLV), 136–156 (VPVI…TMIG), 174–194 (FIAG…VFFE), 226–246 (LLSY…LAGP), 252–268 (GWIA…LGRF), 281–301 (DILF…VGIL), 320–340 (AILL…GTSA), 358–378 (AAWW…LPGA), and 416–436 (WGMP…AVLV).

Belongs to the arsenite-antimonite (ArsB) efflux (TC 2.A.45) family.

The protein localises to the magnetosome membrane. Plays a role in biomineralization; might regulate pH in the magnetosome. This is Magnetosome protein MamN (mamN) from Paramagnetospirillum magneticum (strain ATCC 700264 / AMB-1) (Magnetospirillum magneticum).